The sequence spans 104 residues: DNA-directed RNA polymerase subunit omega (104 aa).

The interval 76–104 (IEEEKRRKEEEEKKIKEQIAKEKEDGEKI) is disordered.

Belongs to the RNA polymerase subunit omega family. The RNAP catalytic core consists of 2 alpha, 1 beta, 1 beta' and 1 omega subunit. When a sigma factor is associated with the core the holoenzyme is formed, which can initiate transcription.

The catalysed reaction is RNA(n) + a ribonucleoside 5'-triphosphate = RNA(n+1) + diphosphate. Its function is as follows. Promotes RNA polymerase assembly. Latches the N- and C-terminal regions of the beta' subunit thereby facilitating its interaction with the beta and alpha subunits. The sequence is that of DNA-directed RNA polymerase subunit omega from Streptococcus pneumoniae (strain CGSP14).